Reading from the N-terminus, the 599-residue chain is THO complex subunit 1 (599 aa).

Disordered regions lie at residues 376 to 395 and 497 to 599; these read EKQP…RRQR and KYQA…MPVS. A compositionally biased stretch (basic and acidic residues) spans 502–522; the sequence is PNEKAKRAKKEETKGGSHETE. A compositionally biased stretch (acidic residues) spans 575-585; the sequence is QIEDGETEEAG.

As to quaternary structure, component of the THO complex, which is composed of THO1, THO2, THO3, THO5, THO6 and THO7.

Its subcellular location is the nucleus. Its function is as follows. Acts as a component of the THO subcomplex of the TREX complex which is thought to couple mRNA transcription, processing and nuclear export. Contributes to the integrity of the endogenous trans-acting small interfering RNA (ta-siRNA) pathway. May process or transport a long RNA molecule so that it can be a template for secondary siRNA production. May participate in the trafficking of siRNA precursors to the ARGONAUTE catalytic center. Required for the generation of functional messenger ribonucleoproteins (mRNPs). Plays an important roles in plant innate immunity. The chain is THO complex subunit 1 (THO1) from Arabidopsis thaliana (Mouse-ear cress).